Reading from the N-terminus, the 329-residue chain is Alpha/beta hydrolase domain-containing protein 17C (329 aa).

Positions 46–85 are disordered; that stretch reads APEQRGPGAPAPASAASTSSASAAAQPAPQQPEEGGAGPG. A compositionally biased stretch (low complexity) spans 51–79; it reads GPGAPAPASAASTSSASAAAQPAPQQPEE. Active-site charge relay system residues include Ser-211, Asp-276, and His-305.

The protein belongs to the AB hydrolase superfamily. ABHD17 family. In terms of processing, palmitoylated on cysteine residues located in a cysteine cluster at the N-terminus which promotes membrane localization. Palmitoylation is required for post-synaptic localization and for depalmitoylating activity towards DLG4/PSD95.

The protein localises to the recycling endosome membrane. It localises to the cell projection. It is found in the dendritic spine. Its subcellular location is the postsynaptic density membrane. The catalysed reaction is S-hexadecanoyl-L-cysteinyl-[protein] + H2O = L-cysteinyl-[protein] + hexadecanoate + H(+). In terms of biological role, hydrolyzes fatty acids from S-acylated cysteine residues in proteins. Has depalmitoylating activity towards NRAS and DLG4/PSD95. The polypeptide is Alpha/beta hydrolase domain-containing protein 17C (Bos taurus (Bovine)).